The primary structure comprises 89 residues: Large ribosomal subunit protein bL27 (89 aa).

Belongs to the bacterial ribosomal protein bL27 family.

This is Large ribosomal subunit protein bL27 from Bacteroides thetaiotaomicron (strain ATCC 29148 / DSM 2079 / JCM 5827 / CCUG 10774 / NCTC 10582 / VPI-5482 / E50).